A 372-amino-acid polypeptide reads, in one-letter code: Putative glutamate--cysteine ligase 2 (372 aa).

It belongs to the glutamate--cysteine ligase type 2 family. YbdK subfamily.

It carries out the reaction L-cysteine + L-glutamate + ATP = gamma-L-glutamyl-L-cysteine + ADP + phosphate + H(+). Its function is as follows. ATP-dependent carboxylate-amine ligase which exhibits weak glutamate--cysteine ligase activity. This is Putative glutamate--cysteine ligase 2 from Rhodopirellula baltica (strain DSM 10527 / NCIMB 13988 / SH1).